The primary structure comprises 557 residues: Urocanate hydratase (557 aa).

NAD(+) contacts are provided by residues 53-54 (GG), Q131, 177-179 (GMG), E197, 243-244 (NA), 264-268 (QTSAH), 274-275 (YL), and Y323. C411 is an active-site residue. NAD(+) is bound at residue G493.

The protein belongs to the urocanase family. The cofactor is NAD(+).

It is found in the cytoplasm. The catalysed reaction is 4-imidazolone-5-propanoate = trans-urocanate + H2O. Its pathway is amino-acid degradation; L-histidine degradation into L-glutamate; N-formimidoyl-L-glutamate from L-histidine: step 2/3. Catalyzes the conversion of urocanate to 4-imidazolone-5-propionate. The polypeptide is Urocanate hydratase (Mesorhizobium japonicum (strain LMG 29417 / CECT 9101 / MAFF 303099) (Mesorhizobium loti (strain MAFF 303099))).